A 108-amino-acid polypeptide reads, in one-letter code: Peptidyl-prolyl cis-trans isomerase FKBP1B (108 aa).

A PPIase FKBP-type domain is found at 20 to 108 (GQICVVHYTG…IFDVELLNLE (89 aa)).

Belongs to the FKBP-type PPIase family. FKBP1 subfamily. As to quaternary structure, identified in a complex composed of RYR2, FKBP1B, PKA catalytic subunit, PRKAR2A, AKAP6, and the protein phosphatases PP2A and PP1. Interacts directly with RYR2. In terms of tissue distribution, detected in heart muscle (at protein level). Ubiquitous.

It is found in the cytoplasm. The protein localises to the sarcoplasmic reticulum. It catalyses the reaction [protein]-peptidylproline (omega=180) = [protein]-peptidylproline (omega=0). Its activity is regulated as follows. Inhibited by both FK506 and rapamycin. In terms of biological role, has the potential to contribute to the immunosuppressive and toxic effects of FK506 and rapamycin. PPIases accelerate the folding of proteins. It catalyzes the cis-trans isomerization of proline imidic peptide bonds in oligopeptides. The polypeptide is Peptidyl-prolyl cis-trans isomerase FKBP1B (Fkbp1b) (Rattus norvegicus (Rat)).